We begin with the raw amino-acid sequence, 323 residues long: Ig gamma chain C region (323 aa).

3 Ig-like domains span residues 6–96 (PSVF…KTVA), 114–213 (PSVF…KTIS), and 222–318 (PKVY…KSIS).

In Oryctolagus cuniculus (Rabbit), this protein is Ig gamma chain C region.